The following is a 311-amino-acid chain: tRNA dimethylallyltransferase (311 aa).

Glycine 9–threonine 16 is a binding site for ATP. Substrate is bound at residue threonine 11–threonine 16. The interval aspartate 34 to glutamine 37 is interaction with substrate tRNA.

Belongs to the IPP transferase family. In terms of assembly, monomer. It depends on Mg(2+) as a cofactor.

It catalyses the reaction adenosine(37) in tRNA + dimethylallyl diphosphate = N(6)-dimethylallyladenosine(37) in tRNA + diphosphate. Functionally, catalyzes the transfer of a dimethylallyl group onto the adenine at position 37 in tRNAs that read codons beginning with uridine, leading to the formation of N6-(dimethylallyl)adenosine (i(6)A). In Clostridium botulinum (strain Langeland / NCTC 10281 / Type F), this protein is tRNA dimethylallyltransferase.